The chain runs to 343 residues: Ribosomal RNA small subunit methyltransferase C (343 aa).

Belongs to the methyltransferase superfamily. RsmC family. Monomer.

It is found in the cytoplasm. The enzyme catalyses guanosine(1207) in 16S rRNA + S-adenosyl-L-methionine = N(2)-methylguanosine(1207) in 16S rRNA + S-adenosyl-L-homocysteine + H(+). In terms of biological role, specifically methylates the guanine in position 1207 of 16S rRNA in the 30S particle. The polypeptide is Ribosomal RNA small subunit methyltransferase C (Shewanella sediminis (strain HAW-EB3)).